A 374-amino-acid polypeptide reads, in one-letter code: Aclacinomycin 10-hydroxylase RdmB (374 aa).

Positions 171, 190, 213, 240, 241, and 255 each coordinate S-adenosyl-L-methionine.

The protein belongs to the class I-like SAM-binding methyltransferase superfamily. Cation-independent O-methyltransferase family. In terms of assembly, homodimer. Homotetramer in solution. Tetramers might not be very stable in solution.

It carries out the reaction 15-demethylaclacinomycin T + AH2 + O2 = 10-decarboxymethylaclacinomycin T + A + CO2 + H2O. The catalysed reaction is 10-carboxy-13-deoxycarminomycin + AH2 + O2 + H(+) = 10-hydroxy-13-deoxycarminomycin + A + CO2 + H2O. It catalyses the reaction 10-hydroxy-13-deoxycarminomycin + S-adenosyl-L-methionine = 10-hydroxy-13-deoxydaunorubicin + S-adenosyl-L-homocysteine + H(+). It participates in antibiotic biosynthesis; rhodomycin biosynthesis. The protein operates within antibiotic biosynthesis; aclacinomycin biosynthesis. The hydroxylation reaction requires S-adenosyl-L-methionine (SAM) as a cofactor. S-adenosine-L-homocysteine and sinefungin (a SAM analog) can also support the decarboxylative hydroxylation activity with 10-carboxy-13-deoxycarminomycin as substrate. SAM and its analogs are considered an essential structural ligand to maintain ternary structural integrity and the proper binding mode and orientation of electron-rich substrates during decarboxylative hydroxylation of C-10 by RdmB. Involved in the biosynthesis of anthracyclines, an important group of aromatic polyketide antibiotics used in cancer chemotherapy. Acts as a 10-hydroxylase to catalyze a decarboxylative hydroxylation reaction on anthracyclines. During biosynthesis of rhodomycin, it catalyzes the removal of the carboxylic group at the C-10 position of 15-demethoxy-epsilon-rhodomycin coupled to hydroxylation at the same C-10 position to yield beta-rhodomycin. In vitro, can also catalyze the removal of the carboxylic group at the C-10 position of 15-demethoxyaclacinomycin T coupled to hydroxylation at the same C-10 position to yield 10-decarboxymethylaclacinomycin T. It can also use 10-carboxy-13-deoxycarminomycin, an analog of 15-demethoxy-epsilon-rhodomycin, to yield 10-hydroxy-13-deoxycarminomycin. In terms of biological role, in addition to its hydroxylation activity, it can act in vitro as a S-adenosyl-L-methionine-dependent O-methyltransferase and catalyze the 4-O-methylation of 10-hydroxy-13-deoxycarminomycin to 10-hydroxy-13-deoxydaunorubicin. The triglycosyl group of anthracyclines prevents the methylation reaction. This chain is Aclacinomycin 10-hydroxylase RdmB, found in Streptomyces purpurascens.